Here is a 496-residue protein sequence, read N- to C-terminus: Glutamyl-tRNA(Gln) amidotransferase subunit A (496 aa).

Residues Lys-75 and Ser-150 each act as charge relay system in the active site. Ser-174 functions as the Acyl-ester intermediate in the catalytic mechanism.

Belongs to the amidase family. GatA subfamily. In terms of assembly, heterotrimer of A, B and C subunits.

The catalysed reaction is L-glutamyl-tRNA(Gln) + L-glutamine + ATP + H2O = L-glutaminyl-tRNA(Gln) + L-glutamate + ADP + phosphate + H(+). Its function is as follows. Allows the formation of correctly charged Gln-tRNA(Gln) through the transamidation of misacylated Glu-tRNA(Gln) in organisms which lack glutaminyl-tRNA synthetase. The reaction takes place in the presence of glutamine and ATP through an activated gamma-phospho-Glu-tRNA(Gln). In Burkholderia thailandensis (strain ATCC 700388 / DSM 13276 / CCUG 48851 / CIP 106301 / E264), this protein is Glutamyl-tRNA(Gln) amidotransferase subunit A.